The chain runs to 198 residues: Shikimate kinase (198 aa).

An ATP-binding site is contributed by 26-31 (GSGKSQ). Ser30 lines the Mg(2+) pocket. Positions 48, 72, and 94 each coordinate substrate. Arg132 contributes to the ATP binding site. Position 151 (Arg151) interacts with substrate. Position 167 (Gln167) interacts with ATP.

This sequence belongs to the shikimate kinase family. In terms of assembly, monomer. The cofactor is Mg(2+).

Its subcellular location is the cytoplasm. The enzyme catalyses shikimate + ATP = 3-phosphoshikimate + ADP + H(+). It functions in the pathway metabolic intermediate biosynthesis; chorismate biosynthesis; chorismate from D-erythrose 4-phosphate and phosphoenolpyruvate: step 5/7. Catalyzes the specific phosphorylation of the 3-hydroxyl group of shikimic acid using ATP as a cosubstrate. This chain is Shikimate kinase, found in Prochlorococcus marinus (strain NATL2A).